A 64-amino-acid chain; its full sequence is Conotoxin Ca5.3 (64 aa).

The first 22 residues, 1-22 (MRCVPVFIILLLLIASAPGVDA), serve as a signal peptide directing secretion. Positions 23 to 48 (QPKTKYNAPLTSLHDNAKGILQEHWN) are excised as a propeptide. I61 carries the post-translational modification Isoleucine amide.

Belongs to the conotoxin T superfamily. In terms of processing, contains 2 disulfide bonds that can be either 'C1-C3, C2-C4' or 'C1-C4, C2-C3', since these disulfide connectivities have been observed for conotoxins with cysteine framework V (for examples, see AC P0DQQ7 and AC P81755). Expressed by the venom duct.

The protein resides in the secreted. The protein is Conotoxin Ca5.3 of Conus caracteristicus (Characteristic cone).